A 99-amino-acid polypeptide reads, in one-letter code: Large ribosomal subunit protein bL21 (99 aa).

The protein belongs to the bacterial ribosomal protein bL21 family. In terms of assembly, part of the 50S ribosomal subunit. Contacts protein L20.

In terms of biological role, this protein binds to 23S rRNA in the presence of protein L20. The sequence is that of Large ribosomal subunit protein bL21 from Acholeplasma laidlawii (strain PG-8A).